Reading from the N-terminus, the 159-residue chain is Protein-export protein SecB (159 aa).

Belongs to the SecB family. In terms of assembly, homotetramer, a dimer of dimers. One homotetramer interacts with 1 SecA dimer.

It localises to the cytoplasm. In terms of biological role, one of the proteins required for the normal export of preproteins out of the cell cytoplasm. It is a molecular chaperone that binds to a subset of precursor proteins, maintaining them in a translocation-competent state. It also specifically binds to its receptor SecA. This chain is Protein-export protein SecB, found in Rhizobium etli (strain CIAT 652).